The chain runs to 380 residues: Protein COS12 (380 aa).

At 1–70 (MDGAKFENTV…WKIRGKRHYL (70 aa)) the chain is on the cytoplasmic side. A helical membrane pass occupies residues 71-91 (VIVTALMFEVLYFLWTYSYIF). At 92-231 (RERTLGKQVS…KLLWAFKEVT (140 aa)) the chain is on the extracellular side. Residues 232–252 (IMNSRFAFFSIAYLNGLLTIP) traverse the membrane as a helical segment. Residues 253–257 (RLRNS) lie on the Cytoplasmic side of the membrane. The chain crosses the membrane as a helical span at residues 258–278 (LHILYVCAVLSSMIIEYLIGI). Residues 279–380 (DKFRFKSMNL…KEAQSACNDV (102 aa)) are Extracellular-facing.

It belongs to the DUP/COS family.

Its subcellular location is the membrane. This is Protein COS12 (COS12) from Saccharomyces cerevisiae (strain ATCC 204508 / S288c) (Baker's yeast).